A 161-amino-acid chain; its full sequence is D-amino-acid N-acetyltransferase HPA3 (161 aa).

Position 2 is an N-acetylserine (serine 2). The N-acetyltransferase domain maps to 14–161; that stretch reads IVVKAIEPKD…DKVLYKRNGY (148 aa). An acetyl-CoA-binding site is contributed by 98–111; the sequence is LYVTERARVKGVGR.

The protein belongs to the acetyltransferase family. GNAT subfamily. Autoacetylates in an intermolecular reaction.

The protein localises to the cytoplasm. It localises to the nucleus. The catalysed reaction is a D-alpha-amino acid + acetyl-CoA = an N-acetyl-D-amino acid + CoA + H(+). In terms of biological role, N-acetyltransferase that acts on a wide range of D-amino acids. Catalyzes the N-acetylation through an ordered bi-bi mechanism, in which acetyl-CoA is the first substrate to be bound and CoA is the last product to be liberated. D-amino acids are toxic for the cell and their N-acetylation, preceding removal from cells, plays an important role in detoxification of D-amino acids. In vitro, capable of acetylating histone H4 at 'Lys-8' and polyamines like putrescine, spermidine and spermine. The sequence is that of D-amino-acid N-acetyltransferase HPA3 from Saccharomyces cerevisiae (strain ATCC 204508 / S288c) (Baker's yeast).